The chain runs to 282 residues: Bifunctional protein FolD 1 (282 aa).

NADP(+) contacts are provided by residues 167–169 and S192; that span reads GRS.

This sequence belongs to the tetrahydrofolate dehydrogenase/cyclohydrolase family. Homodimer.

It catalyses the reaction (6R)-5,10-methylene-5,6,7,8-tetrahydrofolate + NADP(+) = (6R)-5,10-methenyltetrahydrofolate + NADPH. The enzyme catalyses (6R)-5,10-methenyltetrahydrofolate + H2O = (6R)-10-formyltetrahydrofolate + H(+). Its pathway is one-carbon metabolism; tetrahydrofolate interconversion. Functionally, catalyzes the oxidation of 5,10-methylenetetrahydrofolate to 5,10-methenyltetrahydrofolate and then the hydrolysis of 5,10-methenyltetrahydrofolate to 10-formyltetrahydrofolate. The sequence is that of Bifunctional protein FolD 1 from Colwellia psychrerythraea (strain 34H / ATCC BAA-681) (Vibrio psychroerythus).